Here is a 316-residue protein sequence, read N- to C-terminus: Ribosomal protein L11 methyltransferase (316 aa).

4 residues coordinate S-adenosyl-L-methionine: threonine 163, glycine 184, aspartate 206, and asparagine 249.

This sequence belongs to the methyltransferase superfamily. PrmA family.

It localises to the cytoplasm. The catalysed reaction is L-lysyl-[protein] + 3 S-adenosyl-L-methionine = N(6),N(6),N(6)-trimethyl-L-lysyl-[protein] + 3 S-adenosyl-L-homocysteine + 3 H(+). Methylates ribosomal protein L11. This is Ribosomal protein L11 methyltransferase from Pediococcus pentosaceus (strain ATCC 25745 / CCUG 21536 / LMG 10740 / 183-1w).